Reading from the N-terminus, the 430-residue chain is Target of rapamycin complex 1 subunit toc1 (430 aa).

Residues serine 204 and serine 399 each carry the phosphoserine modification.

In terms of assembly, the target of rapamycin complex 1 (TORC1) is composed of at least mip1, pop3/wat1, tco89, toc1 and tor2.

The protein resides in the cytoplasm. Its function is as follows. Component of TORC1, which regulates multiple cellular processes to control cell growth in response to environmental signals. Tor2 is essential for growth. Nutrient limitation and environmental stress signals cause inactivation of TORC1. Active TORC1 positively controls cell growth and ribosome biogenesis by regulating ribosomal protein gene expression. TORC1 negatively controls G1 cell-cycle arrest, sexual development and amino acid uptake. Represses mating, meiosis and sporulation efficiency by interfering with the functions of the transcription factor ste11 and the meiosis-promoting RNA-binding protein mei2. The chain is Target of rapamycin complex 1 subunit toc1 from Schizosaccharomyces pombe (strain 972 / ATCC 24843) (Fission yeast).